Consider the following 315-residue polypeptide: Heme oxygenase 2 (315 aa).

Residues 1 to 12 (MSSEVETSEGVD) are compositionally biased toward acidic residues. The tract at residues 1–28 (MSSEVETSEGVDESEKNSMAPEKENHTK) is disordered. Serine 2 is modified (N-acetylserine). Serine 2 carries the phosphoserine modification. Residues 2–294 (SSEVETSEGV…TTVAVLRKPS (293 aa)) are Cytoplasmic-facing. A compositionally biased stretch (basic and acidic residues) spans 13-28 (ESEKNSMAPEKENHTK). Residues histidine 44, tyrosine 153, lysine 198, and arginine 202 each contribute to the heme b site. 2 HRM repeats span residues 263–268 (KCPFYA) and 280–285 (NCPFQT). S-nitrosocysteine is present on residues cysteine 264 and cysteine 281. The helical; Anchor for type IV membrane protein transmembrane segment at 295–315 (LQLILAASVALVAGLLAWYYM) threads the bilayer.

The protein belongs to the heme oxygenase family. A soluble form arises by proteolytic removal of the membrane anchor. In terms of processing, S-nitrosylated by BLVRB. As to expression, ubiquitous.

The protein localises to the microsome membrane. Its subcellular location is the endoplasmic reticulum membrane. It catalyses the reaction heme b + 3 reduced [NADPH--hemoprotein reductase] + 3 O2 = biliverdin IXalpha + CO + Fe(2+) + 3 oxidized [NADPH--hemoprotein reductase] + 3 H2O + H(+). In terms of biological role, catalyzes the oxidative cleavage of heme at the alpha-methene bridge carbon, released as carbon monoxide (CO), to generate biliverdin IXalpha, while releasing the central heme iron chelate as ferrous iron. This chain is Heme oxygenase 2 (Hmox2), found in Mus musculus (Mouse).